A 386-amino-acid polypeptide reads, in one-letter code: Galactokinase (386 aa).

Residue 35 to 38 coordinates substrate; the sequence is EHTD. ATP contacts are provided by residues Ser-69 and 125-131; that span reads GAGLSSS. The Mg(2+) site is built by Ser-131 and Glu-163. Asp-175 functions as the Proton acceptor in the catalytic mechanism. Tyr-224 provides a ligand contact to substrate.

This sequence belongs to the GHMP kinase family. GalK subfamily.

It localises to the cytoplasm. The enzyme catalyses alpha-D-galactose + ATP = alpha-D-galactose 1-phosphate + ADP + H(+). It participates in carbohydrate metabolism; galactose metabolism. Its function is as follows. Catalyzes the transfer of the gamma-phosphate of ATP to D-galactose to form alpha-D-galactose-1-phosphate (Gal-1-P). In Vibrio vulnificus (strain YJ016), this protein is Galactokinase.